The primary structure comprises 115 residues: Large ribosomal subunit protein bL20 (115 aa).

The protein belongs to the bacterial ribosomal protein bL20 family.

In terms of biological role, binds directly to 23S ribosomal RNA and is necessary for the in vitro assembly process of the 50S ribosomal subunit. It is not involved in the protein synthesizing functions of that subunit. In Prochlorococcus marinus subsp. pastoris (strain CCMP1986 / NIES-2087 / MED4), this protein is Large ribosomal subunit protein bL20.